Consider the following 187-residue polypeptide: Peptidyl-tRNA hydrolase (187 aa).

Residue Y14 participates in tRNA binding. Residue H19 is the Proton acceptor of the active site. TRNA is bound by residues Y63 and N65.

This sequence belongs to the PTH family. In terms of assembly, monomer.

It is found in the cytoplasm. The enzyme catalyses an N-acyl-L-alpha-aminoacyl-tRNA + H2O = an N-acyl-L-amino acid + a tRNA + H(+). In terms of biological role, hydrolyzes ribosome-free peptidyl-tRNAs (with 1 or more amino acids incorporated), which drop off the ribosome during protein synthesis, or as a result of ribosome stalling. Functionally, catalyzes the release of premature peptidyl moieties from peptidyl-tRNA molecules trapped in stalled 50S ribosomal subunits, and thus maintains levels of free tRNAs and 50S ribosomes. The chain is Peptidyl-tRNA hydrolase from Thermodesulfovibrio yellowstonii (strain ATCC 51303 / DSM 11347 / YP87).